We begin with the raw amino-acid sequence, 427 residues long: Serine--tRNA ligase (427 aa).

231 to 233 (TAE) is an L-serine binding site. An ATP-binding site is contributed by 262–264 (RSE). Glu285 is an L-serine binding site. 349–352 (EISS) is an ATP binding site. Ser385 provides a ligand contact to L-serine.

Belongs to the class-II aminoacyl-tRNA synthetase family. Type-1 seryl-tRNA synthetase subfamily. Homodimer. The tRNA molecule binds across the dimer.

The protein localises to the cytoplasm. The catalysed reaction is tRNA(Ser) + L-serine + ATP = L-seryl-tRNA(Ser) + AMP + diphosphate + H(+). It carries out the reaction tRNA(Sec) + L-serine + ATP = L-seryl-tRNA(Sec) + AMP + diphosphate + H(+). Its pathway is aminoacyl-tRNA biosynthesis; selenocysteinyl-tRNA(Sec) biosynthesis; L-seryl-tRNA(Sec) from L-serine and tRNA(Sec): step 1/1. In terms of biological role, catalyzes the attachment of serine to tRNA(Ser). Is also able to aminoacylate tRNA(Sec) with serine, to form the misacylated tRNA L-seryl-tRNA(Sec), which will be further converted into selenocysteinyl-tRNA(Sec). In Sinorhizobium fredii (strain NBRC 101917 / NGR234), this protein is Serine--tRNA ligase.